The sequence spans 82 residues: MSDNIRTLQGRVLSNKMDKSITVAIERKVKHPLYGKYLKRTTKIHAHDEQNQCNAGDVVTIRECRPLSKTKSWTLVEVVSKA.

This sequence belongs to the universal ribosomal protein uS17 family. Part of the 30S ribosomal subunit.

Functionally, one of the primary rRNA binding proteins, it binds specifically to the 5'-end of 16S ribosomal RNA. This chain is Small ribosomal subunit protein uS17, found in Shewanella sediminis (strain HAW-EB3).